The sequence spans 817 residues: LPS-assembly protein LptD (817 aa).

The N-terminal stretch at 1 to 45 (MDRLPLPHALHVPTHRPFAAPLPPRRLLARLAALMLCGVPLAVLA) is a signal peptide.

It belongs to the LptD family. Component of the lipopolysaccharide transport and assembly complex. Interacts with LptE and LptA.

Its subcellular location is the cell outer membrane. Together with LptE, is involved in the assembly of lipopolysaccharide (LPS) at the surface of the outer membrane. The protein is LPS-assembly protein LptD of Acidovorax sp. (strain JS42).